A 128-amino-acid polypeptide reads, in one-letter code: Insulin-like growth factor 2 (128 aa).

The N-terminal stretch at 1–24 is a signal peptide; sequence MGISMGKSMLVLLTFLAFASCCIA. Positions 25-52 are b; that stretch reads AYRPSETLCGGELVDTLQFVCGDRGFYF. 3 cysteine pairs are disulfide-bonded: C33–C71, C45–C84, and C70–C75. The c stretch occupies residues 53–64; sequence SRPASRVSRRSR. The a stretch occupies residues 65 to 85; sequence GIVEECCFRSCDLALLETYCA. The segment at 86–91 is d; that stretch reads TPAKSE. A propeptide spans 92 to 128 (e peptide); sequence RDVSASLAVLPDNFPRYPVGKFFQYDTWRQSTQRLRR.

The protein belongs to the insulin family. Interacts with MYORG; this interaction is required for IGF2 secretion. Interacts with integrins ITGAV:ITGB3 and ITGA6:ITGB4; integrin-binding is required for IGF2 signaling. Proteolytically processed by PCSK4, proIGF2 is cleaved at Arg-128 and Arg-92 to generate big-IGF2 and mature IGF2.

The protein resides in the secreted. The insulin-like growth factors possess growth-promoting activity. Major fetal growth hormone in mammals. Plays a key role in regulating fetoplacental development. IGF2 is influenced by placental lactogen. Also involved in tissue differentiation. In adults, involved in glucose metabolism in adipose tissue, skeletal muscle and liver. Acts as a ligand for integrin which is required for IGF2 signaling. Positively regulates myogenic transcription factor MYOD1 function by facilitating the recruitment of transcriptional coactivators, thereby controlling muscle terminal differentiation. Inhibits myoblast differentiation and metabolism via increasing the mitochondrial respiration rate. Its function is as follows. Preptin undergoes glucose-mediated co-secretion with insulin, and acts as a physiological amplifier of glucose-mediated insulin secretion. Exhibits osteogenic properties by increasing osteoblast mitogenic activity through phosphoactivation of MAPK1 and MAPK3. The polypeptide is Insulin-like growth factor 2 (Cavia porcellus (Guinea pig)).